Consider the following 885-residue polypeptide: Alanine--tRNA ligase (885 aa).

The Zn(2+) site is built by histidine 572, histidine 576, cysteine 675, and histidine 679.

It belongs to the class-II aminoacyl-tRNA synthetase family. Zn(2+) is required as a cofactor.

The protein resides in the cytoplasm. It catalyses the reaction tRNA(Ala) + L-alanine + ATP = L-alanyl-tRNA(Ala) + AMP + diphosphate. Its function is as follows. Catalyzes the attachment of alanine to tRNA(Ala) in a two-step reaction: alanine is first activated by ATP to form Ala-AMP and then transferred to the acceptor end of tRNA(Ala). Also edits incorrectly charged Ser-tRNA(Ala) and Gly-tRNA(Ala) via its editing domain. The sequence is that of Alanine--tRNA ligase from Leifsonia xyli subsp. xyli (strain CTCB07).